We begin with the raw amino-acid sequence, 148 residues long: 3-dehydroquinate dehydratase (148 aa).

Catalysis depends on tyrosine 23, which acts as the Proton acceptor. Residues asparagine 75, histidine 81, and aspartate 88 each contribute to the substrate site. Histidine 101 functions as the Proton donor in the catalytic mechanism. Substrate is bound by residues 102–103 (LS) and arginine 112.

The protein belongs to the type-II 3-dehydroquinase family. As to quaternary structure, homododecamer.

The catalysed reaction is 3-dehydroquinate = 3-dehydroshikimate + H2O. Its pathway is metabolic intermediate biosynthesis; chorismate biosynthesis; chorismate from D-erythrose 4-phosphate and phosphoenolpyruvate: step 3/7. Catalyzes a trans-dehydration via an enolate intermediate. This chain is 3-dehydroquinate dehydratase, found in Xylella fastidiosa (strain M23).